A 220-amino-acid chain; its full sequence is Splicing factor U2AF 26 kDa subunit (220 aa).

Position 2 is an N-acetylalanine (Ala2). A C3H1-type 1 zinc finger spans residues 12–40 (EKDKVNCSFYFKIGACRHGDRCSRLHNKP). Residues 65–147 (SHCHVSDVEV…QAVHAELSPV (83 aa)) form the RRM domain. Residues 149–176 (DFRESCCRQYEMGECTRGGFCNFMHLRP) form a C3H1-type 2 zinc finger. Residues 186-220 (YGRGPRHRSPPRSHTGHRPRERNRRRSPDHRHGRF) form a disordered region. Residues 189 to 220 (GPRHRSPPRSHTGHRPRERNRRRSPDHRHGRF) are compositionally biased toward basic residues.

It belongs to the splicing factor SR family. As to quaternary structure, interacts with GFI1, U2AF2 and C1QBP. Isoform 3 interacts with PER1. Isoform 3 is rapidly degraded by a proteasome-mediated degradation pathway. Ubiquitous. Highly expressed in the brain.

It localises to the nucleus. Its subcellular location is the nucleus speckle. The protein resides in the cytoplasm. In terms of biological role, RNA-binding protein that function as a pre-mRNA splicing factor. Plays a critical role in both constitutive and enhancer-dependent splicing by mediating protein-protein interactions and protein-RNA interactions required for accurate 3'-splice site selection. It can functionally substitute for U2AF1 in constitutive splicing and enhancer-dependent splicing. Acts by enhancing the binding of U2AF2 to weak pyrimidine tracts. Also participates in the regulation of alternative pre-mRNA splicing. Activates exon 5 skipping of PTPRC during T-cell activation; an event reversed by GFI1. Binds to RNA at the AG dinucleotide at the 3'-splice site. Shows a preference for AGC or AGA. Alternative splicing of U2AF1L4 may play a role in connecting the circadian rhythm to changing external cues: may provide a circadian buffering system in central and periphery clocks that allows synchronized adaption to clock-resetting stimuli in order to prevent potentially pathogenic desynchronization. This chain is Splicing factor U2AF 26 kDa subunit (U2af1l4), found in Mus musculus (Mouse).